The following is a 449-amino-acid chain: Probable glycine dehydrogenase (decarboxylating) subunit 1 (449 aa).

Belongs to the GcvP family. N-terminal subunit subfamily. As to quaternary structure, the glycine cleavage system is composed of four proteins: P, T, L and H. In this organism, the P 'protein' is a heterodimer of two subunits.

The enzyme catalyses N(6)-[(R)-lipoyl]-L-lysyl-[glycine-cleavage complex H protein] + glycine + H(+) = N(6)-[(R)-S(8)-aminomethyldihydrolipoyl]-L-lysyl-[glycine-cleavage complex H protein] + CO2. The glycine cleavage system catalyzes the degradation of glycine. The P protein binds the alpha-amino group of glycine through its pyridoxal phosphate cofactor; CO(2) is released and the remaining methylamine moiety is then transferred to the lipoamide cofactor of the H protein. In Pyrococcus abyssi (strain GE5 / Orsay), this protein is Probable glycine dehydrogenase (decarboxylating) subunit 1.